The sequence spans 119 residues: Large ribosomal subunit protein bL19 (119 aa).

The protein belongs to the bacterial ribosomal protein bL19 family.

In terms of biological role, this protein is located at the 30S-50S ribosomal subunit interface and may play a role in the structure and function of the aminoacyl-tRNA binding site. This Pseudarthrobacter chlorophenolicus (strain ATCC 700700 / DSM 12829 / CIP 107037 / JCM 12360 / KCTC 9906 / NCIMB 13794 / A6) (Arthrobacter chlorophenolicus) protein is Large ribosomal subunit protein bL19.